The primary structure comprises 424 residues: Ornithine aminotransferase (424 aa).

Lysine 272 carries the N6-(pyridoxal phosphate)lysine modification. Lysine 390 participates in a covalent cross-link: Glycyl lysine isopeptide (Lys-Gly) (interchain with G-Cter in ubiquitin).

This sequence belongs to the class-III pyridoxal-phosphate-dependent aminotransferase family. Requires pyridoxal 5'-phosphate as cofactor.

It is found in the cytoplasm. The enzyme catalyses a 2-oxocarboxylate + L-ornithine = L-glutamate 5-semialdehyde + an L-alpha-amino acid. The protein operates within amino-acid biosynthesis; L-proline biosynthesis; L-glutamate 5-semialdehyde from L-ornithine: step 1/1. Its activity is regulated as follows. By arginine and urea. Catalyzes the transamination of ornithine into L-glutamate gamma-semialdehyde, the second step of arginine degradation. This is Ornithine aminotransferase (CAR2) from Saccharomyces cerevisiae (strain ATCC 204508 / S288c) (Baker's yeast).